Consider the following 1391-residue polypeptide: DNA-directed RNA polymerase subunit beta' (1391 aa).

Zn(2+) contacts are provided by cysteine 72, cysteine 74, cysteine 87, and cysteine 90. Mg(2+)-binding residues include aspartate 462, aspartate 464, and aspartate 466. The Zn(2+) site is built by cysteine 816, cysteine 890, cysteine 897, and cysteine 900.

It belongs to the RNA polymerase beta' chain family. As to quaternary structure, the RNAP catalytic core consists of 2 alpha, 1 beta, 1 beta' and 1 omega subunit. When a sigma factor is associated with the core the holoenzyme is formed, which can initiate transcription. Requires Mg(2+) as cofactor. Zn(2+) serves as cofactor.

It catalyses the reaction RNA(n) + a ribonucleoside 5'-triphosphate = RNA(n+1) + diphosphate. Its function is as follows. DNA-dependent RNA polymerase catalyzes the transcription of DNA into RNA using the four ribonucleoside triphosphates as substrates. This Neisseria meningitidis serogroup C / serotype 2a (strain ATCC 700532 / DSM 15464 / FAM18) protein is DNA-directed RNA polymerase subunit beta'.